We begin with the raw amino-acid sequence, 325 residues long: Glycine--tRNA ligase alpha subunit (325 aa).

The protein belongs to the class-II aminoacyl-tRNA synthetase family. In terms of assembly, tetramer of two alpha and two beta subunits.

The protein resides in the cytoplasm. The enzyme catalyses tRNA(Gly) + glycine + ATP = glycyl-tRNA(Gly) + AMP + diphosphate. This Ralstonia nicotianae (strain ATCC BAA-1114 / GMI1000) (Ralstonia solanacearum) protein is Glycine--tRNA ligase alpha subunit.